The chain runs to 368 residues: Isocitrate dehydrogenase [NAD] regulatory subunit 3, mitochondrial (368 aa).

The N-terminal 26 residues, 1–26 (MARRSVSIFNRLLANPPSPFTSLSRS), are a transit peptide targeting the mitochondrion.

It belongs to the isocitrate and isopropylmalate dehydrogenases family. As to quaternary structure, heterooligomer of catalytic and regulatory subunits. Interacts with 14-3-3-like proteins GRF1 GRF3 and GRF8. As to expression, mainly expressed at a low level in pollen.

The protein localises to the mitochondrion. In terms of biological role, performs an essential role in the oxidative function of the citric acid cycle. The polypeptide is Isocitrate dehydrogenase [NAD] regulatory subunit 3, mitochondrial (IDH3) (Arabidopsis thaliana (Mouse-ear cress)).